The chain runs to 511 residues: MQVTVTNADGLKRELKVQVPSQELEAKLGAKLDEMKNQVRLKGFRPGKVPVSHLRKTFGKQVMGDVIQETVGESSQQALQDESLRPAFQPSIDLEGEIQDVLDGKADLTFKMSFEVIPAFELSDFSKVSLERLTAEVKDEDIDVALKRLAENQKNFEPREEGAKAETGDLLTIDFVGKIDGEAFEGGSAEDANLEIGSGRFIPGFEEQLVGVKVGDETQVKVAFPADYGAEHLAGKDAVFDVKVKEVKAPAEVKLDDELAKRFGLESMEKLREALGEQMKGEYARMSRMHLKRAMLDKLDELHSFELPPTMVEQEFQQIWQQFEHELSHQNKTAADLDEPEEDVRAEYRKIAERRVRLGLLLAEVGEKNNITVTEQELNQALAERARQFPGQEQQLYRYFQQNPQAIQELRAPIFEDKVVDFIAELAKVEDKVVSRDELFADPDADEHEHHHHDHDHDHDHDHDHDHGHDHDHGDEKPKKKPAAKKAAAKSDDGEAKPAAKKAPAKKKKED.

Residues 168–253 enclose the PPIase FKBP-type domain; the sequence is GDLLTIDFVG…VKEVKAPAEV (86 aa). The disordered stretch occupies residues 446–511; sequence DEHEHHHHDH…KAPAKKKKED (66 aa). Positions 455-478 are enriched in basic and acidic residues; it reads HDHDHDHDHDHDHGHDHDHGDEKP. The span at 479–488 shows a compositional bias: basic residues; it reads KKKPAAKKAA. A compositionally biased stretch (basic and acidic residues) spans 489 to 498; it reads AKSDDGEAKP. Residues 499 to 511 are compositionally biased toward basic residues; that stretch reads AAKKAPAKKKKED.

The protein belongs to the FKBP-type PPIase family. Tig subfamily.

It is found in the cytoplasm. It carries out the reaction [protein]-peptidylproline (omega=180) = [protein]-peptidylproline (omega=0). Involved in protein export. Acts as a chaperone by maintaining the newly synthesized protein in an open conformation. Functions as a peptidyl-prolyl cis-trans isomerase. The polypeptide is Trigger factor (Parvibaculum lavamentivorans (strain DS-1 / DSM 13023 / NCIMB 13966)).